We begin with the raw amino-acid sequence, 172 residues long: Translation initiation factor IF-3 (172 aa).

Belongs to the IF-3 family. Monomer.

The protein resides in the cytoplasm. Its function is as follows. IF-3 binds to the 30S ribosomal subunit and shifts the equilibrium between 70S ribosomes and their 50S and 30S subunits in favor of the free subunits, thus enhancing the availability of 30S subunits on which protein synthesis initiation begins. The sequence is that of Translation initiation factor IF-3 from Campylobacter fetus subsp. fetus (strain 82-40).